Reading from the N-terminus, the 1212-residue chain is DNA-directed RNA polymerase subunit beta' (1212 aa).

Zn(2+) is bound by residues C60, C62, C75, and C78. Mg(2+) is bound by residues D450, D452, and D454. Residues C819, C893, C900, and C903 each coordinate Zn(2+).

Belongs to the RNA polymerase beta' chain family. As to quaternary structure, the RNAP catalytic core consists of 2 alpha, 1 beta, 1 beta' and 1 omega subunit. When a sigma factor is associated with the core the holoenzyme is formed, which can initiate transcription. Mg(2+) serves as cofactor. Zn(2+) is required as a cofactor.

The catalysed reaction is RNA(n) + a ribonucleoside 5'-triphosphate = RNA(n+1) + diphosphate. DNA-dependent RNA polymerase catalyzes the transcription of DNA into RNA using the four ribonucleoside triphosphates as substrates. This chain is DNA-directed RNA polymerase subunit beta', found in Streptococcus thermophilus (strain ATCC BAA-491 / LMD-9).